The sequence spans 603 residues: UvrABC system protein C (603 aa).

In terms of domain architecture, GIY-YIG spans 17-94 (TTSGCYKMLN…IKTHKPDYNV (78 aa)).

It belongs to the UvrC family. Interacts with UvrB in an incision complex.

The protein localises to the cytoplasm. The UvrABC repair system catalyzes the recognition and processing of DNA lesions. UvrC both incises the 5' and 3' sides of the lesion. The N-terminal half is responsible for the 3' incision and the C-terminal half is responsible for the 5' incision. This chain is UvrABC system protein C, found in Borreliella burgdorferi (strain ATCC 35210 / DSM 4680 / CIP 102532 / B31) (Borrelia burgdorferi).